A 445-amino-acid polypeptide reads, in one-letter code: Probable protein phosphatase 2C 14 (445 aa).

The PPM-type phosphatase domain maps to 120–440 (GFGVVSRNGK…DDITVVIIDL (321 aa)). Residues Asp156, Gly157, and Asp318 each coordinate Mn(2+). The tract at residues 384 to 404 (NSENESPSLNREIGSSPSKSP) is disordered. The segment covering 390-404 (PSLNREIGSSPSKSP) has biased composition (polar residues). Asp431 contacts Mn(2+).

It belongs to the PP2C family. It depends on Mg(2+) as a cofactor. Mn(2+) is required as a cofactor.

The enzyme catalyses O-phospho-L-seryl-[protein] + H2O = L-seryl-[protein] + phosphate. The catalysed reaction is O-phospho-L-threonyl-[protein] + H2O = L-threonyl-[protein] + phosphate. In Arabidopsis thaliana (Mouse-ear cress), this protein is Probable protein phosphatase 2C 14.